The following is a 311-amino-acid chain: Pyrimidine-specific ribonucleoside hydrolase RihA (311 aa).

H240 is a catalytic residue.

The protein belongs to the IUNH family. RihA subfamily.

Hydrolyzes cytidine or uridine to ribose and cytosine or uracil, respectively. This chain is Pyrimidine-specific ribonucleoside hydrolase RihA, found in Salmonella choleraesuis (strain SC-B67).